The following is a 523-amino-acid chain: UDP-glucuronosyltransferase 3A1 (523 aa).

A signal peptide spans 1–23 (MAVGRKSLILSLLIQHFVLLHGA). At 24–483 (KILTVCFLGG…YSYQQPLYQQ (460 aa)) the chain is on the extracellular side. The N-linked (GlcNAc...) asparagine glycan is linked to N125. A helical transmembrane segment spans residues 484–504 (YLLDVFLFVCVCVIGACYLTV). The Cytoplasmic portion of the chain corresponds to 505 to 523 (KLLKMFIQKLCSFRKLKQN).

The protein belongs to the UDP-glycosyltransferase family.

The protein localises to the membrane. It catalyses the reaction glucuronate acceptor + UDP-alpha-D-glucuronate = acceptor beta-D-glucuronoside + UDP + H(+). In terms of biological role, UDP-glucuronosyltransferases catalyze phase II biotransformation reactions in which lipophilic substrates are conjugated with glucuronic acid to increase water solubility and enhance excretion. They are of major importance in the conjugation and subsequent elimination of potentially toxic xenobiotics and endogenous compounds. In Xenopus laevis (African clawed frog), this protein is UDP-glucuronosyltransferase 3A1 (ugt3a1).